Reading from the N-terminus, the 114-residue chain is Large ribosomal subunit protein uL22 (114 aa).

It belongs to the universal ribosomal protein uL22 family. In terms of assembly, part of the 50S ribosomal subunit.

In terms of biological role, this protein binds specifically to 23S rRNA; its binding is stimulated by other ribosomal proteins, e.g. L4, L17, and L20. It is important during the early stages of 50S assembly. It makes multiple contacts with different domains of the 23S rRNA in the assembled 50S subunit and ribosome. The globular domain of the protein is located near the polypeptide exit tunnel on the outside of the subunit, while an extended beta-hairpin is found that lines the wall of the exit tunnel in the center of the 70S ribosome. The chain is Large ribosomal subunit protein uL22 from Streptococcus suis (strain 98HAH33).